The following is a 90-amino-acid chain: Large ribosomal subunit protein bL31 (90 aa).

A disordered region spans residues 65–90 (YSKQEGSGSKSNKSKSTKSKKGKGKK). A compositionally biased stretch (basic residues) spans 76–90 (NKSKSTKSKKGKGKK).

Belongs to the bacterial ribosomal protein bL31 family. Type A subfamily. As to quaternary structure, part of the 50S ribosomal subunit.

In terms of biological role, binds the 23S rRNA. The chain is Large ribosomal subunit protein bL31 from Trichodesmium erythraeum (strain IMS101).